The chain runs to 188 residues: Elongation factor P (188 aa).

N6-(3,6-diaminohexanoyl)-5-hydroxylysine is present on lysine 34.

The protein belongs to the elongation factor P family. Post-translationally, may be beta-lysylated on the epsilon-amino group of Lys-34 by the combined action of EpmA and EpmB, and then hydroxylated on the C5 position of the same residue by EpmC (if this protein is present). Lysylation is critical for the stimulatory effect of EF-P on peptide-bond formation. The lysylation moiety may extend toward the peptidyltransferase center and stabilize the terminal 3-CCA end of the tRNA. Hydroxylation of the C5 position on Lys-34 may allow additional potential stabilizing hydrogen-bond interactions with the P-tRNA.

Its subcellular location is the cytoplasm. Its pathway is protein biosynthesis; polypeptide chain elongation. In terms of biological role, involved in peptide bond synthesis. Alleviates ribosome stalling that occurs when 3 or more consecutive Pro residues or the sequence PPG is present in a protein, possibly by augmenting the peptidyl transferase activity of the ribosome. Modification of Lys-34 is required for alleviation. This is Elongation factor P from Xanthomonas campestris pv. campestris (strain B100).